A 333-amino-acid chain; its full sequence is NADH-quinone oxidoreductase subunit H (333 aa).

8 consecutive transmembrane segments (helical) span residues 15–35 (FFIF…FVTY), 88–108 (FILA…VIPF), 117–137 (IGVG…GVVT), 159–179 (ISYE…AGSL), 191–211 (VWYI…AVAE), 239–259 (WAFF…LITV), 274–296 (IPGA…WFRV), and 313–333 (VLLP…ELFF).

The protein belongs to the complex I subunit 1 family. NDH-1 is composed of 14 different subunits. Subunits NuoA, H, J, K, L, M, N constitute the membrane sector of the complex.

The protein localises to the cell membrane. It catalyses the reaction a quinone + NADH + 5 H(+)(in) = a quinol + NAD(+) + 4 H(+)(out). Its function is as follows. NDH-1 shuttles electrons from NADH, via FMN and iron-sulfur (Fe-S) centers, to quinones in the respiratory chain. The immediate electron acceptor for the enzyme in this species is believed to be ubiquinone. Couples the redox reaction to proton translocation (for every two electrons transferred, four hydrogen ions are translocated across the cytoplasmic membrane), and thus conserves the redox energy in a proton gradient. This subunit may bind ubiquinone. The chain is NADH-quinone oxidoreductase subunit H from Bacillus cereus (strain G9842).